Reading from the N-terminus, the 440-residue chain is UPF0761 membrane protein Rru_A2625 (440 aa).

A run of 7 helical transmembrane segments spans residues 29–49 (ILAT…THDI), 61–81 (LLAL…FPGF), 117–137 (GLTA…LLTI), 157–177 (LLVY…SFSL), 201–221 (PTLG…MLVP), 224–244 (PVPL…SALL), and 264–284 (ALAA…VVLM).

It belongs to the UPF0761 family.

The protein localises to the cell inner membrane. In Rhodospirillum rubrum (strain ATCC 11170 / ATH 1.1.1 / DSM 467 / LMG 4362 / NCIMB 8255 / S1), this protein is UPF0761 membrane protein Rru_A2625.